We begin with the raw amino-acid sequence, 342 residues long: S-adenosyl-L-methionine-dependent tRNA 4-demethylwyosine synthase (342 aa).

Positions 45, 58, and 71 each coordinate [2Fe-2S] cluster. Positions Tyr64–Glu312 constitute a Radical SAM core domain. 3 residues coordinate [4Fe-4S] cluster: Cys81, Cys85, and Cys88.

This sequence belongs to the TYW1 family. As to quaternary structure, monomer. The cofactor is [2Fe-2S] cluster. It depends on [4Fe-4S] cluster as a cofactor.

The protein resides in the cytoplasm. The enzyme catalyses N(1)-methylguanosine(37) in tRNA(Phe) + pyruvate + S-adenosyl-L-methionine = 4-demethylwyosine(37) in tRNA(Phe) + 5'-deoxyadenosine + L-methionine + CO2 + H2O. Functionally, component of the wyosine derivatives biosynthesis pathway that catalyzes the condensation of N-methylguanine with 2 carbon atoms from pyruvate to form the tricyclic 4-demethylwyosine (imG-14) on guanosine-37 of tRNA(Phe). This chain is S-adenosyl-L-methionine-dependent tRNA 4-demethylwyosine synthase, found in Pyrococcus horikoshii (strain ATCC 700860 / DSM 12428 / JCM 9974 / NBRC 100139 / OT-3).